Reading from the N-terminus, the 57-residue chain is Large ribosomal subunit protein bL32 (57 aa).

The span at 1–16 (MAVQKSRKTPSRRGMR) shows a compositional bias: basic residues. Residues 1–37 (MAVQKSRKTPSRRGMRRSHDALSTTAITVDETTGELH) form a disordered region. Residues 21–31 (ALSTTAITVDE) are compositionally biased toward polar residues.

Belongs to the bacterial ribosomal protein bL32 family.

The chain is Large ribosomal subunit protein bL32 from Hydrogenovibrio crunogenus (strain DSM 25203 / XCL-2) (Thiomicrospira crunogena).